The sequence spans 320 residues: Cytochrome f (320 aa).

A signal peptide spans 1-35 (MQTRNAFSWLKKQITRSISVSLMIYILTRTSISSA). Heme contacts are provided by Tyr-36, Cys-56, Cys-59, and His-60. Residues 286-305 (VQGLLFFLASVILAQIFLVL) form a helical membrane-spanning segment.

It belongs to the cytochrome f family. As to quaternary structure, the 4 large subunits of the cytochrome b6-f complex are cytochrome b6, subunit IV (17 kDa polypeptide, petD), cytochrome f and the Rieske protein, while the 4 small subunits are PetG, PetL, PetM and PetN. The complex functions as a dimer. Heme is required as a cofactor.

It is found in the plastid. It localises to the chloroplast thylakoid membrane. Its function is as follows. Component of the cytochrome b6-f complex, which mediates electron transfer between photosystem II (PSII) and photosystem I (PSI), cyclic electron flow around PSI, and state transitions. The chain is Cytochrome f from Atropa belladonna (Belladonna).